A 433-amino-acid polypeptide reads, in one-letter code: Glucose-1-phosphate adenylyltransferase (433 aa).

Residues Tyr117, Gly182, 197-198 (EK), and Ser215 each bind alpha-D-glucose 1-phosphate.

Belongs to the bacterial/plant glucose-1-phosphate adenylyltransferase family. As to quaternary structure, homotetramer.

The enzyme catalyses alpha-D-glucose 1-phosphate + ATP + H(+) = ADP-alpha-D-glucose + diphosphate. It participates in glycan biosynthesis; glycogen biosynthesis. In terms of biological role, involved in the biosynthesis of ADP-glucose, a building block required for the elongation reactions to produce glycogen. Catalyzes the reaction between ATP and alpha-D-glucose 1-phosphate (G1P) to produce pyrophosphate and ADP-Glc. The sequence is that of Glucose-1-phosphate adenylyltransferase from Nitrosomonas europaea (strain ATCC 19718 / CIP 103999 / KCTC 2705 / NBRC 14298).